The primary structure comprises 153 residues: Endoribonuclease YbeY (153 aa).

3 residues coordinate Zn(2+): H114, H118, and H124.

The protein belongs to the endoribonuclease YbeY family. The cofactor is Zn(2+).

The protein localises to the cytoplasm. In terms of biological role, single strand-specific metallo-endoribonuclease involved in late-stage 70S ribosome quality control and in maturation of the 3' terminus of the 16S rRNA. This Shewanella sp. (strain MR-7) protein is Endoribonuclease YbeY.